A 148-amino-acid polypeptide reads, in one-letter code: Large ribosomal subunit protein uL15 (148 aa).

The interval 1–61 (MKINDLKPAP…GGQMPLQRRV (61 aa)) is disordered.

The protein belongs to the universal ribosomal protein uL15 family. As to quaternary structure, part of the 50S ribosomal subunit.

In terms of biological role, binds to the 23S rRNA. This chain is Large ribosomal subunit protein uL15, found in Thermodesulfovibrio yellowstonii (strain ATCC 51303 / DSM 11347 / YP87).